We begin with the raw amino-acid sequence, 290 residues long: Arylamine N-acetyltransferase 1 (290 aa).

At methionine 1 the chain carries N-acetylmethionine. Residue cysteine 68 is the Acyl-thioester intermediate of the active site. CoA is bound at residue serine 103. 106–107 (VH) contacts substrate. Active-site residues include histidine 107 and aspartate 122. Residue tyrosine 208 participates in CoA binding.

The protein belongs to the arylamine N-acetyltransferase family.

The protein resides in the cytoplasm. The catalysed reaction is an arylamine + acetyl-CoA = an N-acetylarylamine + CoA. Participates in the detoxification of a plethora of hydrazine and arylamine drugs. Isoniazid, 2-aminofluorene and anisidine are preferred substrates for NAT-1. No activity with p-aminobenzoic acid (PABA) nor SMZ. This chain is Arylamine N-acetyltransferase 1 (Nat1), found in Mus musculus (Mouse).